The sequence spans 1957 residues: [F-actin]-monooxygenase MICAL2 (1957 aa).

The tract at residues 2–494 (GENEDEKQAQ…KHLYITKELE (493 aa)) is monooxygenase domain. Residues Cys-97, 116–118 (EKR), 123–125 (RNN), Phe-183, Tyr-298, and Asp-398 contribute to the FAD site. The 104-residue stretch at 516 to 619 (DIRPSKLLTW…MVMYLSKFYE (104 aa)) folds into the Calponin-homology (CH) domain. The residue at position 631 (Ser-631) is a Phosphoserine. The short motif at 660–681 (RKRTPRVDGQTGENDMNKRRRK) is the Nuclear localization signal element. 2 disordered regions span residues 660-714 (RKRT…NQNK) and 886-942 (QNKL…HPSH). Polar residues predominate over residues 687–714 (DEPSNFSSRSLGSNQECGSSKEGGNQNK). Positions 899 to 910 (PPSPPSRLPSPD) are enriched in pro residues. Over residues 911-925 (PAASSSPSTVDSASP) the composition is skewed to low complexity. An LIM zinc-binding domain is found at 1000-1062 (DTCYFCKKRV…KPHFIHCKTN (63 aa)). 8 residues coordinate Zn(2+): Cys-1002, Cys-1005, His-1023, Cys-1026, Cys-1029, Cys-1032, Cys-1052, and His-1055. Disordered regions lie at residues 1070–1143 (AELK…PSEW), 1168–1243 (SEDS…TPSK), 1258–1345 (VNKR…LYLP), 1361–1431 (GEDG…EGGP), 1467–1626 (KAGE…SPPC), and 1675–1779 (ESRQ…KEKK). Residues 1185–1195 (SHTEPCEEKPW) are compositionally biased toward basic and acidic residues. The span at 1232–1243 (RANSFQSPTPSK) shows a compositional bias: polar residues. A compositionally biased stretch (low complexity) spans 1275 to 1294 (LPSSSSHSSSPPSSSSTSVS). The segment covering 1302–1316 (SPPQMTASEPLSQVS) has biased composition (polar residues). Positions 1324–1363 (TPNFRRRAVAQGAPREIPLYLPHHPKPEWAEYCLVSPGED) are interaction with MAPK1. Composition is skewed to basic and acidic residues over residues 1388–1402 (SNHRDPHPIWGKDRS) and 1413–1431 (GEDREKGSTGARKEEEGGP). A compositionally biased stretch (low complexity) spans 1485 to 1496 (VLKPVRPLLLPR). A compositionally biased stretch (basic and acidic residues) spans 1552–1562 (GGKKAWAKQES). Over residues 1570–1579 (CTRSFSLRKT) the composition is skewed to polar residues. Position 1688 is a phosphoserine (Ser-1688). Positions 1718 to 1733 (APPPPPPPPPPPPPPT) are enriched in pro residues. A compositionally biased stretch (low complexity) spans 1751–1762 (ASSSASSTSSSS). The bMERB domain maps to 1796 to 1945 (KQEELKRLYK…EKAEDQHFES (150 aa)).

Belongs to the Mical family. As to quaternary structure, interacts with PLXNA4. Interacts with RAB1B. Interacts with MAPK1/ERK2. Interacts with RAB35, RAB8A, RAB10, RAB13 and RAB15 (in their GTP-bound forms); binding to RAB35 is of low affinity compared to other Rab proteins; at least in case of RAB8A may bind 2 molecules of RAB8A simultaneously through a high and a low affinity binding site, respectively. May interact with MAPK1/ERK2. Interacts with CORO1C; this interaction recruits MICAL2 to the actin filaments. It depends on FAD as a cofactor.

The protein localises to the nucleus. It is found in the cytoplasm. It catalyses the reaction L-methionyl-[F-actin] + NADPH + O2 + H(+) = L-methionyl-(R)-S-oxide-[F-actin] + NADP(+) + H2O. Its activity is regulated as follows. Specifically inhibited by CCG-1423, a small molecule inhibitor of SRF:MKL1/MRTF-A-dependent transcription. In terms of biological role, methionine monooxygenase that promotes depolymerization of F-actin by mediating oxidation of residues 'Met-44' and 'Met-47' on actin to form methionine-sulfoxide, resulting in actin filament disassembly and preventing repolymerization. Regulates the disassembly of branched actin networks also by oxidizing ARP3B-containing ARP2/3 complexes leading to ARP3B dissociation from the network. Acts as a key regulator of the SRF signaling pathway elicited by nerve growth factor and serum: mediates oxidation and subsequent depolymerization of nuclear actin, leading to increase MKL1/MRTF-A presence in the nucleus and promote SRF:MKL1/MRTF-A-dependent gene transcription. Does not activate SRF:MKL1/MRTF-A through RhoA. This Homo sapiens (Human) protein is [F-actin]-monooxygenase MICAL2.